A 273-amino-acid polypeptide reads, in one-letter code: Type IV secretion system protein PtlF (273 aa).

A signal peptide spans 1–20 (MMAARMMAAGLAATALSAHA).

The protein belongs to the TrbG/VirB9 family. Forms a complex with PtlI.

The protein localises to the cell outer membrane. Its function is as follows. Component of the type IV secretion system ptl required for secretion of assembled pertussis toxin (PTX) through the outer membrane. The chain is Type IV secretion system protein PtlF (ptlF) from Bordetella pertussis (strain Tohama I / ATCC BAA-589 / NCTC 13251).